Reading from the N-terminus, the 506-residue chain is NAD(P)H-quinone oxidoreductase subunit 2 (506 aa).

Transmembrane regions (helical) follow at residues 14–34 (AIIPEAFILLGIVGTLLVDLA), 42–62 (WAPIICYLSIGSSLVSLALQW), 79–99 (LAIAFRAIISLSTLISLLISW), 108–128 (PIGEFAAIVLSATLGAMLLCG), 132–152 (LISVFISLETLSVASYLLSGY), 167–187 (LLVGSAAAAVYLYGSSFLYGL), 206–226 (FITSLALVFVLSTVAFKIAAV), 240–260 (PTPVVAFLSVGSKTAGFAFAI), 276–296 (LLFTILAILSMALGNVVALAQ), 302–322 (MLAYSSIGQAGFVMIGIVSGT), 330–350 (VLYLAAYLFMNLGAFSCVILF), 374–394 (LGLSLCLLSLGGLPPMLGFFG), and 409–429 (LLVIVGLVTSVISIYYYISVI).

This sequence belongs to the complex I subunit 2 family. As to quaternary structure, NDH-1 can be composed of about 15 different subunits; different subcomplexes with different compositions have been identified which probably have different functions.

It localises to the cellular thylakoid membrane. It catalyses the reaction a plastoquinone + NADH + (n+1) H(+)(in) = a plastoquinol + NAD(+) + n H(+)(out). It carries out the reaction a plastoquinone + NADPH + (n+1) H(+)(in) = a plastoquinol + NADP(+) + n H(+)(out). In terms of biological role, NDH-1 shuttles electrons from an unknown electron donor, via FMN and iron-sulfur (Fe-S) centers, to quinones in the respiratory and/or the photosynthetic chain. The immediate electron acceptor for the enzyme in this species is believed to be plastoquinone. Couples the redox reaction to proton translocation, and thus conserves the redox energy in a proton gradient. Cyanobacterial NDH-1 also plays a role in inorganic carbon-concentration. The chain is NAD(P)H-quinone oxidoreductase subunit 2 from Prochlorococcus marinus (strain AS9601).